The primary structure comprises 125 residues: uncharacterized protein (125 aa).

The 63-residue stretch at M1–T63 folds into the HTH dtxR-type domain.

Belongs to the DtxR/MntR family.

This is an uncharacterized protein from Methanocaldococcus jannaschii (strain ATCC 43067 / DSM 2661 / JAL-1 / JCM 10045 / NBRC 100440) (Methanococcus jannaschii).